The sequence spans 445 residues: Chromosomal replication initiator protein DnaA (445 aa).

The domain I, interacts with DnaA modulators stretch occupies residues Met1 to Lys73. Positions Lys73–Thr106 are domain II. The domain III, AAA+ region stretch occupies residues Met107–Ser323. Residues Gly151, Gly153, Lys154, and Thr155 each coordinate ATP. Residues Ser324 to Lys445 are domain IV, binds dsDNA.

The protein belongs to the DnaA family. Oligomerizes as a right-handed, spiral filament on DNA at oriC.

Its subcellular location is the cytoplasm. Plays an essential role in the initiation and regulation of chromosomal replication. ATP-DnaA binds to the origin of replication (oriC) to initiate formation of the DNA replication initiation complex once per cell cycle. Binds the DnaA box (a 9 base pair repeat at the origin) and separates the double-stranded (ds)DNA. Forms a right-handed helical filament on oriC DNA; dsDNA binds to the exterior of the filament while single-stranded (ss)DNA is stabiized in the filament's interior. The ATP-DnaA-oriC complex binds and stabilizes one strand of the AT-rich DNA unwinding element (DUE), permitting loading of DNA polymerase. After initiation quickly degrades to an ADP-DnaA complex that is not apt for DNA replication. Binds acidic phospholipids. The sequence is that of Chromosomal replication initiator protein DnaA from Clostridium botulinum (strain Loch Maree / Type A3).